Reading from the N-terminus, the 101-residue chain is Translation initiation factor IF-1, chloroplastic (101 aa).

Over residues 1–10 the composition is skewed to polar residues; the sequence is MNQLKKSFSP. Residues 1 to 35 form a disordered region; it reads MNQLKKSFSPTEGKKDQNNLINDPQKNKQKKQKKL. In terms of domain architecture, S1-like spans 26-101; the sequence is KNKQKKQKKL…TKGRITYRHR (76 aa).

The protein belongs to the IF-1 family. In terms of assembly, component of the 30S ribosomal translation pre-initiation complex which assembles on the 30S ribosome in the order IF-2 and IF-3, IF-1 and N-formylmethionyl-tRNA(fMet); mRNA recruitment can occur at any time during PIC assembly.

The protein localises to the plastid. It is found in the chloroplast. Functionally, one of the essential components for the initiation of protein synthesis. Stabilizes the binding of IF-2 and IF-3 on the 30S subunit to which N-formylmethionyl-tRNA(fMet) subsequently binds. Helps modulate mRNA selection, yielding the 30S pre-initiation complex (PIC). Upon addition of the 50S ribosomal subunit IF-1, IF-2 and IF-3 are released leaving the mature 70S translation initiation complex. The polypeptide is Translation initiation factor IF-1, chloroplastic (Tetradesmus obliquus (Green alga)).